The primary structure comprises 74 residues: Large ribosomal subunit protein eL38B (74 aa).

It belongs to the eukaryotic ribosomal protein eL38 family. Component of the large ribosomal subunit (LSU). Mature yeast ribosomes consist of a small (40S) and a large (60S) subunit. The 40S small subunit contains 1 molecule of ribosomal RNA (18S rRNA) and at least 33 different proteins. The large 60S subunit contains 3 rRNA molecules (25S, 5.8S and 5S rRNA) and at least 46 different proteins.

It localises to the cytoplasm. Its function is as follows. Component of the ribosome, a large ribonucleoprotein complex responsible for the synthesis of proteins in the cell. The small ribosomal subunit (SSU) binds messenger RNAs (mRNAs) and translates the encoded message by selecting cognate aminoacyl-transfer RNA (tRNA) molecules. The large subunit (LSU) contains the ribosomal catalytic site termed the peptidyl transferase center (PTC), which catalyzes the formation of peptide bonds, thereby polymerizing the amino acids delivered by tRNAs into a polypeptide chain. The nascent polypeptides leave the ribosome through a tunnel in the LSU and interact with protein factors that function in enzymatic processing, targeting, and the membrane insertion of nascent chains at the exit of the ribosomal tunnel. The polypeptide is Large ribosomal subunit protein eL38B (rpl3802) (Schizosaccharomyces pombe (strain 972 / ATCC 24843) (Fission yeast)).